The chain runs to 210 residues: Dephospho-CoA kinase (210 aa).

Positions 15-210 constitute a DPCK domain; sequence VLGLTGGIGC…HKGYLKLALK (196 aa). 23-28 is a binding site for ATP; the sequence is GCGKTA.

The protein belongs to the CoaE family.

The protein localises to the cytoplasm. It carries out the reaction 3'-dephospho-CoA + ATP = ADP + CoA + H(+). The protein operates within cofactor biosynthesis; coenzyme A biosynthesis; CoA from (R)-pantothenate: step 5/5. Its function is as follows. Catalyzes the phosphorylation of the 3'-hydroxyl group of dephosphocoenzyme A to form coenzyme A. This Pseudoalteromonas translucida (strain TAC 125) protein is Dephospho-CoA kinase.